The following is a 473-amino-acid chain: C3a anaphylatoxin chemotactic receptor (473 aa).

The Extracellular segment spans residues methionine 1–aspartate 23. Asparagine 9 carries an N-linked (GlcNAc...) asparagine glycan. A helical transmembrane segment spans residues isoleucine 24 to tryptophan 46. At valine 47–asparagine 57 the chain is on the cytoplasmic side. A helical transmembrane segment spans residues threonine 58–alanine 80. Topologically, residues histidine 81–lysine 96 are extracellular. Cysteines 95 and 172 form a disulfide. A helical transmembrane segment spans residues leucine 97–leucine 118. Over aspartate 119–alanine 139 the chain is Cytoplasmic. A helical transmembrane segment spans residues phenylalanine 140–tyrosine 160. The Extracellular portion of the chain corresponds to arginine 161–arginine 329. 2 positions are modified to sulfotyrosine: tyrosine 174 and tyrosine 184. N-linked (GlcNAc...) asparagine glycosylation is present at asparagine 201. The tract at residues phenylalanine 233–tyrosine 252 is disordered. A Sulfotyrosine modification is found at tyrosine 308. A helical membrane pass occupies residues leucine 330 to valine 349. Over phenylalanine 350–arginine 366 the chain is Cytoplasmic. A helical transmembrane segment spans residues valine 367–leucine 389. Topologically, residues valine 390–aspartate 406 are extracellular. A helical transmembrane segment spans residues histidine 407 to leucine 427. At glycine 428 to valine 473 the chain is on the cytoplasmic side. Serine 448 carries the post-translational modification Phosphoserine. A Phosphothreonine modification is found at threonine 452.

Belongs to the G-protein coupled receptor 1 family. Interacts with VGF-derived peptide TLQP-21.

The protein localises to the cell membrane. Receptor for the chemotactic and inflammatory peptide anaphylatoxin C3a. This receptor stimulates chemotaxis, granule enzyme release and superoxide anion production. This Rattus norvegicus (Rat) protein is C3a anaphylatoxin chemotactic receptor (C3ar1).